The sequence spans 974 residues: UvrABC system protein A (974 aa).

34–41 (GLSGSGKS) lines the ATP pocket. ABC transporter domains are found at residues 331 to 610 (WARS…TNSL) and 630 to 959 (ISKT…QFLK). Residue 663–670 (GVSGGGKS) participates in ATP binding. The segment at 762-788 (CEACQGDGVIKIEMHFLPDVYVTCDVC) adopts a C4-type zinc-finger fold.

Belongs to the ABC transporter superfamily. UvrA family. Forms a heterotetramer with UvrB during the search for lesions.

It localises to the cytoplasm. Its function is as follows. The UvrABC repair system catalyzes the recognition and processing of DNA lesions. UvrA is an ATPase and a DNA-binding protein. A damage recognition complex composed of 2 UvrA and 2 UvrB subunits scans DNA for abnormalities. When the presence of a lesion has been verified by UvrB, the UvrA molecules dissociate. This Brucella suis biovar 1 (strain 1330) protein is UvrABC system protein A.